The primary structure comprises 278 residues: Cyclin-C (278 aa).

A Cyclin N-terminal domain is found at 41-139 (NVIQALGEHL…ILECEFYLLE (99 aa)). Residues 247-278 (TILSKMPKPKPPPNSEGEQGPNGSQNSSYSQS) form a disordered region. Residues 267 to 278 (PNGSQNSSYSQS) are compositionally biased toward polar residues. Residue Ser270 is modified to Phosphoserine.

This sequence belongs to the cyclin family. Cyclin C subfamily. In terms of assembly, component of the Mediator complex, which is composed of MED1, MED4, MED6, MED7, MED8, MED9, MED10, MED11, MED12, MED13, MED13L, MED14, MED15, MED16, MED17, MED18, MED19, MED20, MED21, MED22, MED23, MED24, MED25, MED26, MED27, MED29, MED30, MED31, CCNC, CDK8 and CDC2L6/CDK11. The MED12, MED13, CCNC and CDK8 subunits form a distinct module termed the CDK8 module. Mediator containing the CDK8 module is less active than Mediator lacking this module in supporting transcriptional activation. Individual preparations of the Mediator complex lacking one or more distinct subunits have been variously termed ARC, CRSP, DRIP, PC2, SMCC and TRAP. The cylin/CDK pair formed by CCNC/CDK8 also associates with the large subunit of RNA polymerase II.

The protein localises to the nucleus. Its function is as follows. Component of the Mediator complex, a coactivator involved in regulated gene transcription of nearly all RNA polymerase II-dependent genes. Mediator functions as a bridge to convey information from gene-specific regulatory proteins to the basal RNA polymerase II transcription machinery. Mediator is recruited to promoters by direct interactions with regulatory proteins and serves as a scaffold for the assembly of a functional preinitiation complex with RNA polymerase II and the general transcription factors. Binds to and activates cyclin-dependent kinase CDK8 that phosphorylates the CTD (C-terminal domain) of the large subunit of RNA polymerase II (RNAp II), which may inhibit the formation of a transcription initiation complex. The polypeptide is Cyclin-C (Ccnc) (Rattus norvegicus (Rat)).